We begin with the raw amino-acid sequence, 416 residues long: Gamma-glutamyl phosphate reductase (416 aa).

Belongs to the gamma-glutamyl phosphate reductase family.

It is found in the cytoplasm. It catalyses the reaction L-glutamate 5-semialdehyde + phosphate + NADP(+) = L-glutamyl 5-phosphate + NADPH + H(+). It functions in the pathway amino-acid biosynthesis; L-proline biosynthesis; L-glutamate 5-semialdehyde from L-glutamate: step 2/2. Its function is as follows. Catalyzes the NADPH-dependent reduction of L-glutamate 5-phosphate into L-glutamate 5-semialdehyde and phosphate. The product spontaneously undergoes cyclization to form 1-pyrroline-5-carboxylate. This is Gamma-glutamyl phosphate reductase from Vibrio cholerae serotype O1 (strain ATCC 39541 / Classical Ogawa 395 / O395).